The chain runs to 394 residues: MKIIKVTDLNLKDKKVLIRSDLNVPIKNGKIMCNMRIIKSLETINFVIKNEAKCVIVASHLGNPIEEKYDYNFSLTHIVNHMKKIIKYPIRLIQNYLNGFEAKEKEIIVLENVRFNPGERKNDKNLSKKYANLCDILVMDSFGSSHRSESSTTGIIKFAPISCIGLLFLKEIKYLKKALFNSKRPIVTIFGGSKISTKLGVIEKLSNISENVLVGGGIANTILFSKGHNIGKSLHDKNNISKIKKFLYKKNIIIPKDFIVTDNINKFSSYKEKSIKEIKNEDYIVDIGKKSCECFIKIIKKAKTIFWNGPLGLIEIKQFRNGTKEIANSVIHSSAKSIIGGGETVLAMRMFNFIDRFSYISTGGGAFLSFIEKQELPVLSELKKFKKYTNFKQN.

Residues 21–23 (DLN), Arg36, 60–63 (HLGN), Arg114, and Arg147 contribute to the substrate site. Residues Lys198, Glu315, and 341-344 (GGET) each bind ATP.

The protein belongs to the phosphoglycerate kinase family. As to quaternary structure, monomer.

It is found in the cytoplasm. It carries out the reaction (2R)-3-phosphoglycerate + ATP = (2R)-3-phospho-glyceroyl phosphate + ADP. The protein operates within carbohydrate degradation; glycolysis; pyruvate from D-glyceraldehyde 3-phosphate: step 2/5. The chain is Phosphoglycerate kinase from Wigglesworthia glossinidia brevipalpis.